We begin with the raw amino-acid sequence, 380 residues long: Chaperone protein DnaJ (380 aa).

The segment at M1–K48 is disordered. A J domain is found at D5 to G72. A compositionally biased stretch (basic residues) spans A24–P34. Residues D35–K48 are compositionally biased toward basic and acidic residues. The segment at G139 to N217 adopts a CR-type zinc-finger fold. The Zn(2+) site is built by C152, C155, C169, C172, C191, C194, C205, and C208. 4 CXXCXGXG motif repeats span residues C152–G159, C169–G176, C191–G198, and C205–G212. The tract at residues K357 to A380 is disordered. Basic and acidic residues predominate over residues S364 to A380.

It belongs to the DnaJ family. In terms of assembly, homodimer. The cofactor is Zn(2+).

The protein resides in the cytoplasm. Its function is as follows. Participates actively in the response to hyperosmotic and heat shock by preventing the aggregation of stress-denatured proteins and by disaggregating proteins, also in an autonomous, DnaK-independent fashion. Unfolded proteins bind initially to DnaJ; upon interaction with the DnaJ-bound protein, DnaK hydrolyzes its bound ATP, resulting in the formation of a stable complex. GrpE releases ADP from DnaK; ATP binding to DnaK triggers the release of the substrate protein, thus completing the reaction cycle. Several rounds of ATP-dependent interactions between DnaJ, DnaK and GrpE are required for fully efficient folding. Also involved, together with DnaK and GrpE, in the DNA replication of plasmids through activation of initiation proteins. This chain is Chaperone protein DnaJ, found in Polaromonas sp. (strain JS666 / ATCC BAA-500).